Here is a 540-residue protein sequence, read N- to C-terminus: Telomerase Cajal body protein 1 (540 aa).

Pro residues predominate over residues 1-10; sequence MKTPEAPPLA. A disordered region spans residues 1 to 126; sequence MKTPEAPPLA…GEDVEGVSEE (126 aa). Serine 26, serine 30, serine 54, serine 64, serine 85, and serine 90 each carry phosphoserine. The span at 116 to 126 shows a compositional bias: acidic residues; sequence PGEDVEGVSEE. WD repeat units lie at residues 158–197, 213–258, 263–304, 314–355, 356–396, and 402–441; these read QPEN…YNEG, EGDT…LRAS, NHLD…RDCE, GQSG…ALLG, GHQG…HPLW, and VTTN…LESK. Threonine 480 carries the post-translational modification Phosphothreonine. Serine 482 carries the phosphoserine modification. Positions 520–540 are disordered; it reads SDAHQEEMGQGRTEGGGGEFT. Residues 531–540 are compositionally biased toward gly residues; sequence RTEGGGGEFT.

It belongs to the TCAB1 family. As to quaternary structure, component of the telomerase holoenzyme complex composed of one molecule of TERT, one molecule of WRAP53/TCAB1, two molecules of H/ACA ribonucleoprotein complex subunits DKC1, NOP10, NHP2 and GAR1, and a telomerase RNA template component (TERC). The telomerase holoenzyme complex is associated with TEP1, SMG6/EST1A and POT1. Interacts with the chaperonin-containing T-complex (TRiC) complex; which mediates the folding of WRAP53/TCAB1. Interacts with COIL. Interacts with SMN1. Interacts with RNF8. Interacts with histone H2AX. Phosphorylated at Ser-64 by ATM in response to DNA damage, promoting its interaction with histone H2AX and localization to sites of DNA double-strand breaks.

The protein localises to the nucleus. The protein resides in the cajal body. Its subcellular location is the chromosome. It localises to the telomere. In terms of biological role, RNA chaperone that plays a key role in telomere maintenance and RNA localization to Cajal bodies. Specifically recognizes and binds the Cajal body box (CAB box) present in both small Cajal body RNAs (scaRNAs) and telomerase RNA template component (TERC). Essential component of the telomerase holoenzyme complex, a ribonucleoprotein complex essential for the replication of chromosome termini that elongates telomeres in most eukaryotes. In the telomerase holoenzyme complex, required to stimulate the catalytic activity of the complex. Acts by specifically binding the CAB box of the TERC RNA and controlling the folding of the CR4/CR5 region of the TERC RNA, a critical step for telomerase activity. In addition, also controls telomerase holoenzyme complex localization to Cajal body. During S phase, required for delivery of TERC to telomeres during S phase and for telomerase activity. In addition to its role in telomere maintenance, also required for Cajal body formation, probably by mediating localization of scaRNAs to Cajal bodies. Also plays a role in DNA repair: phosphorylated by ATM in response to DNA damage and relocalizes to sites of DNA double-strand breaks to promote the repair of DNA double-strand breaks. Acts by recruiting the ubiquitin ligase RNF8 to DNA breaks and promote both homologous recombination (HR) and non-homologous end joining (NHEJ). This is Telomerase Cajal body protein 1 from Bos taurus (Bovine).